The chain runs to 81 residues: Omega-conotoxin-like Vc6.4 (81 aa).

The N-terminal stretch at 1–22 (MKLTCVMIVAVLFLTANTFVTA) is a signal peptide. A propeptide spanning residues 23–51 (VPHSSNVLENLYLKARHEMENPEASKLNT) is cleaved from the precursor. Disulfide bonds link Cys-55-Cys-72, Cys-62-Cys-76, and Cys-71-Cys-80.

It belongs to the conotoxin O1 superfamily. As to expression, expressed by the venom duct.

It is found in the secreted. Omega-conotoxins act at presynaptic membranes, they bind and block voltage-gated calcium channels. Act on high voltage-activated (HVA) calcium currents in molluscan neurons. The sequence is that of Omega-conotoxin-like Vc6.4 from Conus victoriae (Queen Victoria cone).